The primary structure comprises 144 residues: uncharacterized protein (144 aa).

Residues methionine 1 to threonine 58 form the HTH lysR-type domain. Residues phenylalanine 18 to alanine 38 constitute a DNA-binding region (H-T-H motif).

It belongs to the LysR transcriptional regulatory family.

This is an uncharacterized protein from Azotobacter vinelandii.